We begin with the raw amino-acid sequence, 210 residues long: Neurotrophin-4 (210 aa).

The N-terminal stretch at 1–24 is a signal peptide; the sequence is MLPLPSCSLPILLLFLLPSVPIES. A propeptide spanning residues 25–80 is cleaved from the precursor; it reads QPPPSTLPPFLAPEWDLLSPRVVLSRGAPAGPPLLFLLEAGAFRESAGAPANRSRR. Asn76 carries N-linked (GlcNAc...) asparagine glycosylation. Disulfide bonds link Cys97-Cys170, Cys141-Cys199, and Cys158-Cys201.

Belongs to the NGF-beta family. In terms of tissue distribution, highest levels in prostate, lower levels in thymus, placenta, and skeletal muscle. Expressed in embryonic and adult tissues.

It localises to the secreted. In terms of biological role, target-derived survival factor for peripheral sensory sympathetic neurons. May promote ameloblast differentiation and subsequent reduction in proliferation of ameloblasts. The chain is Neurotrophin-4 (NTF4) from Homo sapiens (Human).